Here is a 396-residue protein sequence, read N- to C-terminus: Putative glutamate--cysteine ligase 2-2 (396 aa).

This sequence belongs to the glutamate--cysteine ligase type 2 family. YbdK subfamily.

The catalysed reaction is L-cysteine + L-glutamate + ATP = gamma-L-glutamyl-L-cysteine + ADP + phosphate + H(+). ATP-dependent carboxylate-amine ligase which exhibits weak glutamate--cysteine ligase activity. This Mycolicibacterium smegmatis (strain ATCC 700084 / mc(2)155) (Mycobacterium smegmatis) protein is Putative glutamate--cysteine ligase 2-2.